The sequence spans 65 residues: Alpha-conotoxine-like Am1.5 (65 aa).

An N-terminal signal peptide occupies residues 1-21 (MGMRMMFTVFLLVVLATTVVS). The propeptide occupies 22–46 (FMSGRAFRDRNAAAKVSDLIALKAR). Residue glutamate 49 is modified to 4-carboxyglutamate. Positions 52 to 54 (SHP) are ser-Xaa-Pro motif, crucial for potent interaction with nAChR. 4-hydroxyproline is present on residues proline 54 and proline 61. Glutamate 62 bears the 4-carboxyglutamate mark.

This sequence belongs to the conotoxin A superfamily. Contains 2 disulfide bonds. In terms of tissue distribution, expressed by the venom duct.

It localises to the secreted. In terms of biological role, alpha-conotoxins act on postsynaptic membranes, they bind to the nicotinic acetylcholine receptors (nAChR) and thus inhibit them. This is Alpha-conotoxine-like Am1.5 from Conus amadis (Amadis cone).